The chain runs to 463 residues: Mitochondrial dynamics protein MID51 (463 aa).

Residues 1–23 (MAGAGERKGKKDDNGIGTAIDFV) are Mitochondrial intermembrane-facing. The chain crosses the membrane as a helical span at residues 24 to 46 (LSNARLVLGVGGAAMLGIATLAV). The Cytoplasmic portion of the chain corresponds to 47 to 463 (KRMYDRAISA…LSEPEVLLQT (417 aa)). Residues 49–195 (MYDRAISAPT…LSGSLYDDLQ (147 aa)) are dimerization. Phosphoserine is present on residues Ser-55, Ser-59, Ser-79, and Ser-94. The disordered stretch occupies residues 57–77 (PTSPTRLSHSGKRSWEEPNWM). The tract at residues 160–169 (AAVDICAELR) is important for interaction with DNM1L. Ser-187, Ser-189, and His-201 together coordinate ADP. Positions 234 to 243 (RRENPEYFPR) are important for interaction with DNM1L. ADP-binding residues include Ser-340, Arg-342, and Lys-368.

The protein belongs to the MID49/MID51 family. As to quaternary structure, homodimer. Interacts with DNM1L.

Its subcellular location is the mitochondrion outer membrane. Functionally, mitochondrial outer membrane protein which regulates mitochondrial fission/fusion dynamics. Promotes the recruitment and association of the fission mediator dynamin-related protein 1 (DNM1L) to the mitochondrial surface independently of the mitochondrial fission FIS1 and MFF proteins. Regulates DNM1L GTPase activity and DNM1L oligomerization. Binds ADP and can also bind GDP, although with lower affinity. Does not bind CDP, UDP, ATP, AMP or GTP. Inhibits DNM1L GTPase activity in the absence of bound ADP. Requires ADP to stimulate DNM1L GTPase activity and the assembly of DNM1L into long, oligomeric tubules with a spiral pattern, as opposed to the ring-like DNM1L oligomers observed in the absence of bound ADP. Does not require ADP for its function in recruiting DNM1L. This is Mitochondrial dynamics protein MID51 (Mief1) from Rattus norvegicus (Rat).